A 735-amino-acid chain; its full sequence is MLVHLFRVGIRGGPFPGRLLPPLRFQTFSAVRNTWRNGKTGQLHKAEGEYSDGYRSSSLLRAVAHLRSQLWAHLPRAPLAPRWSPSAWCWVGGALLGPMVLSKHPHLCLVALCEAEEAPPASSTPHVVGSRFNWKLFWQFLHPHLLVLGVAVVLALGAALVNVQIPLLLGQLVEVVAKYTRDHVGSFMTESQNLSTHLLILYGVQGLLTFGYLVLLSHVGERMAVDMRRALFSSLLRQDITFFDANKTGQLVSRLTTDVQEFKSSFKLVISQGLRSCTQVAGCLVSLSMLSTRLTLLLMVATPALMGVGTLMGSGLRKLSRQCQEQIARAMGVADEALGNVRTVRAFAMEQREEERYGAELEACRCRAEELGRGIALFQGLSNIAFNCMVLGTLFIGGSLVAGQQLTGGDLMSFLVASQTVQRSMANLSVLFGQVVRGLSAGARVFEYMALNPCIPLSGGCCVPKEQLRGSVTFQNVCFSYPCRPGFEVLKDFTLTLPPGKIVALVGQSGGGKTTVASLLERFYDPTAGVVMLDGRDLRTLDPSWLRGQVVGFISQEPVLFGTTIMENIRFGKLEASDEEVYTAAREANAHEFITSFPEGYNTVVGERGTTLSGGQKQRLAIARALIKQPTVLILDEATSALDAESERVVQEALDRASAGRTVLVIAHRLSTVRGAHCIVVMADGRVWEAGTHEELLKKGGLYAELIRRQALDAPRTAAPPPKKPEGPRSHQHKS.

The transit peptide at 1–25 (MLVHLFRVGIRGGPFPGRLLPPLRF) directs the protein to the mitochondrion. Over 26-144 (QTFSAVRNTW…KLFWQFLHPH (119 aa)) the chain is Mitochondrial matrix. Residues 145–165 (LLVLGVAVVLALGAALVNVQI) form a helical membrane-spanning segment. An ABC transmembrane type-1 domain is found at 150 to 437 (VAVVLALGAA…LSVLFGQVVR (288 aa)). Residues 166–195 (PLLLGQLVEVVAKYTRDHVGSFMTESQNLS) are Mitochondrial intermembrane-facing. The chain crosses the membrane as a helical span at residues 196 to 216 (THLLILYGVQGLLTFGYLVLL). The Mitochondrial matrix segment spans residues 217 to 295 (SHVGERMAVD…SLSMLSTRLT (79 aa)). The chain crosses the membrane as a helical span at residues 296 to 316 (LLLMVATPALMGVGTLMGSGL). The Mitochondrial intermembrane segment spans residues 317-735 (RKLSRQCQEQ…EGPRSHQHKS (419 aa)). An ABC transporter domain is found at 472–709 (VTFQNVCFSY…GGLYAELIRR (238 aa)). Residue 507–514 (GQSGGGKT) participates in ATP binding. The interval 712–735 (LDAPRTAAPPPKKPEGPRSHQHKS) is disordered.

It belongs to the ABC transporter superfamily. ABCB family. Multidrug resistance exporter (TC 3.A.1.201) subfamily. In terms of assembly, the mitochondrial potassium channel (mitoK(ATP)) is composed of 4 subunits of CCDC51/MITOK and 4 subunits of ABCB8/MITOSUR. Interacts with C10orf88/PAAT. Interacts with NRP1; NRP1 regulates ABCB8/MITOSUR protein levels in mitochondria. As to expression, ubiquitous.

It localises to the mitochondrion inner membrane. Channel activity inhibited by ATP via ABCB8/MITOSUR subunit. Its function is as follows. ATP-binding subunit of the mitochondrial ATP-gated potassium channel (mitoK(ATP)). Together with pore-forming subunit CCDC51/MITOK of the mitoK(ATP) channel, mediates ATP-dependent potassium currents across the mitochondrial inner membrane. An increase in ATP intracellular levels closes the channel, inhibiting K(+) transport, whereas a decrease in ATP levels enhances K(+) uptake in the mitochondrial matrix. Plays a role in mitochondrial iron transport. Required for maintenance of normal cardiac function, possibly by influencing mitochondrial iron export and regulating the maturation of cytosolic iron sulfur cluster-containing enzymes. The protein is Mitochondrial potassium channel ATP-binding subunit of Homo sapiens (Human).